We begin with the raw amino-acid sequence, 170 residues long: Photosystem II extrinsic protein V (170 aa).

The signal sequence occupies residues 1 to 33 (MASLFSTLQRSLKGLLILVPVLIGLVLASPAEA). Positions 70, 73, 74, and 137 each coordinate heme c.

This sequence belongs to the cytochrome c family. PsbV subfamily. In terms of assembly, PSII is composed of 1 copy each of membrane proteins PsbA, PsbB, PsbC, PsbD, PsbE, PsbF, PsbH, PsbI, PsbJ, PsbK, PsbL, PsbM, PsbT, PsbX, PsbY, PsbZ, Psb30/Ycf12, peripheral proteins PsbO, CyanoQ (PsbQ), PsbU, PsbV and a large number of cofactors. It forms dimeric complexes. The cofactor is heme c.

The protein localises to the cellular thylakoid membrane. In terms of biological role, one of the extrinsic, lumenal subunits of photosystem II (PSII). PSII is a light-driven water plastoquinone oxidoreductase, using light energy to abstract electrons from H(2)O, generating a proton gradient subsequently used for ATP formation. The extrinsic proteins stabilize the structure of photosystem II oxygen-evolving complex (OEC), the ion environment of oxygen evolution and protect the OEC against heat-induced inactivation. Low-potential cytochrome c that plays a role in the OEC of PSII. The sequence is that of Photosystem II extrinsic protein V from Parasynechococcus marenigrum (strain WH8102).